Reading from the N-terminus, the 389-residue chain is Sterol methyltransferase-like 2 (389 aa).

The helical transmembrane segment at 25 to 45 threads the bilayer; it reads LSWKGAVGLVAATGIGYVLII.

The protein belongs to the class I-like SAM-binding methyltransferase superfamily. Erg6/SMT family.

It is found in the microsome membrane. Unable to convert squalene, botryococcene, cycloartenol, zymosterol or lanosterol to mono-, di-, tri- or tetramethylated derivatives. The polypeptide is Sterol methyltransferase-like 2 (SMT-2) (Botryococcus braunii (Green alga)).